Here is a 221-residue protein sequence, read N- to C-terminus: MFSDFLSLMFTAALMTLGLAVCSLLLGLFLSLIFAVLEANRFVGKPMTVFVALLRGLPEIIVVLLVYFGSTELVEMLTGEYIEFGAFGCGVLALSLIFAAYASQTLRGAIQAIPKGQWESGAALGLSKSYTFIHIVMPQVWRHALPGLSTQWLVLLKDTALVSLIGVDDLMHQADLINTNTHQPFTWYGIAALIYLAVTLISQVGIRKLELRFTRFERGVK.

The region spanning 13 to 206 is the ABC transmembrane type-1 domain; sequence ALMTLGLAVC…AVTLISQVGI (194 aa). A run of 5 helical transmembrane segments spans residues 17-37, 49-69, 82-102, 121-141, and 186-206; these read LGLA…FAVL, VFVA…VYFG, IEFG…AAYA, GAAL…PQVW, and TWYG…QVGI.

This sequence belongs to the binding-protein-dependent transport system permease family. HisMQ subfamily. In terms of assembly, the complex is composed of two ATP-binding proteins (ArtP), two transmembrane proteins (ArtM and ArtQ) and a solute-binding protein (ArtI).

The protein resides in the cell inner membrane. In terms of biological role, part of the ABC transporter complex ArtPIQM involved in arginine transport. Probably responsible for the translocation of the substrate across the membrane. The protein is Arginine ABC transporter permease protein ArtQ (artQ) of Haemophilus influenzae (strain ATCC 51907 / DSM 11121 / KW20 / Rd).